The chain runs to 210 residues: Large ribosomal subunit protein bL25 (210 aa).

The tract at residues 179 to 210 is disordered; the sequence is LPPQQEEEIHSGEQQEPGHPDAEEGRETTPES. Residues 185–210 show a composition bias toward basic and acidic residues; that stretch reads EEIHSGEQQEPGHPDAEEGRETTPES.

This sequence belongs to the bacterial ribosomal protein bL25 family. CTC subfamily. Part of the 50S ribosomal subunit; part of the 5S rRNA/L5/L18/L25 subcomplex. Contacts the 5S rRNA. Binds to the 5S rRNA independently of L5 and L18.

Functionally, this is one of the proteins that binds to the 5S RNA in the ribosome where it forms part of the central protuberance. The chain is Large ribosomal subunit protein bL25 from Geobacillus sp. (strain WCH70).